Consider the following 236-residue polypeptide: Class B acid phosphatase (236 aa).

Residues 1 to 23 (MRKLTLTLSALALALSLNSVADA) form the signal peptide. Asp-68 acts as the Nucleophile in catalysis. Residues Asp-68 and Asp-70 each contribute to the Mg(2+) site. The active-site Proton donor is Asp-70. Substrate-binding positions include 136 to 137 (TG) and Lys-176. A Mg(2+)-binding site is contributed by Asp-191.

It belongs to the class B bacterial acid phosphatase family. Homotetramer. Mg(2+) serves as cofactor.

The protein localises to the periplasm. It carries out the reaction a phosphate monoester + H2O = an alcohol + phosphate. Activated by ethanol. Also activated by Co(2+), Zn(2+) and glycerol. Inhibited by EDTA, inorganic phosphate, nucleosides and Ca(2+). Unaffected by fluoride and tartrate. Functionally, dephosphorylates several organic phosphate monoesters including 5'-AMP, 3'-AMP, pNPP, PDP, 5'-UMP, 3'-UMP, G2P, glucose 6-P and ribose 5-P. No activity toward organic phosphate diesters. Also has a phosphotransferase activity catalyzing the transfer of low-energy phosphate groups from organic phosphate monoesters to free hydroxyl groups of various organic compounds. This is Class B acid phosphatase (aphA) from Morganella morganii (Proteus morganii).